Here is a 236-residue protein sequence, read N- to C-terminus: Sugar fermentation stimulation protein homolog (236 aa).

The protein belongs to the SfsA family.

The polypeptide is Sugar fermentation stimulation protein homolog (Proteus mirabilis (strain HI4320)).